The following is a 286-amino-acid chain: Lipoyl synthase (286 aa).

[4Fe-4S] cluster is bound by residues C29, C34, C40, C55, C59, C62, and S265. The Radical SAM core domain maps to 41 to 254 (WGSGTATFMI…EKIAYSLGFS (214 aa)).

Belongs to the radical SAM superfamily. Lipoyl synthase family. [4Fe-4S] cluster serves as cofactor.

The protein resides in the cytoplasm. The enzyme catalyses [[Fe-S] cluster scaffold protein carrying a second [4Fe-4S](2+) cluster] + N(6)-octanoyl-L-lysyl-[protein] + 2 oxidized [2Fe-2S]-[ferredoxin] + 2 S-adenosyl-L-methionine + 4 H(+) = [[Fe-S] cluster scaffold protein] + N(6)-[(R)-dihydrolipoyl]-L-lysyl-[protein] + 4 Fe(3+) + 2 hydrogen sulfide + 2 5'-deoxyadenosine + 2 L-methionine + 2 reduced [2Fe-2S]-[ferredoxin]. It participates in protein modification; protein lipoylation via endogenous pathway; protein N(6)-(lipoyl)lysine from octanoyl-[acyl-carrier-protein]: step 2/2. Catalyzes the radical-mediated insertion of two sulfur atoms into the C-6 and C-8 positions of the octanoyl moiety bound to the lipoyl domains of lipoate-dependent enzymes, thereby converting the octanoylated domains into lipoylated derivatives. The sequence is that of Lipoyl synthase from Sulfolobus acidocaldarius (strain ATCC 33909 / DSM 639 / JCM 8929 / NBRC 15157 / NCIMB 11770).